A 763-amino-acid chain; its full sequence is MFLNNQNFEKKTSSYSTNNNSSEKIVDLKNPQFIYKIRLESTSTDNLLHLDIDKSETDGPNTEQHLELSSPPRIDKKNKNFNKAHDLLDNKKNKNRQRKKIKNKIHIDDDDDNFSDSTSNSAQTAGDLAISLMRPPKPRSQSIKKVIGNNKIPQQKKQQVASSIDQSITLPNSPPESISLINPLTIQELSRLICIPETDIIKYLFLKGISVTINQTVDNTIISSVAKNFGIAVDSQEQNNKKKKLTNLDIPVIVDNHHCVNRPPVVTILGHVDHGKTSLLDYIHKSNNANKEVGGITQNIVAYEVEFKHQQIVFLDTPGHEAFTSMRSRGANLTDIAIIIIAADDGIKPQTIEAIQHLQKANVPFIVAISKIDKNLDSVDKIQHDLVAQNVISEKLGGSVPIIPISSVTGENIDKLLETILLLAELENLQADPTQLAQGVIIEAHLDKFHGPAATLLIQNGTLHIGDNMVIGMTHAKIRAIINNAKQKINLAAPSSVVEIWGLSSVPATGEVALVVNSDKEAKLKAIENESTNSIIVQKQKSLNSRITLDTISTINAKDENKQVTLIIKTDNQGSTEAILDSLSQFPQSKVQLNVLSIFPGEITATDVELASTTNSSLIGFNTNFAPGSRQAAAKLNVIIENYQIIYALIEGVREKMETLLDPEYSEVPVGEAEVGTVFSLANRKIAGCRVTNNKLLKNSWIKVLRENEIVYQGKIESLKRIREDVEEIQAGNECGIFISEFQLWQTGDKIQSFDLVPKKRSL.

Disordered regions lie at residues 1-22 (MFLN…NNSS), 52-122 (IDKS…SNSA), and 149-168 (NNKI…DQSI). Residues 13-22 (SSYSTNNNSS) are compositionally biased toward low complexity. Residues 73 to 92 (RIDKKNKNFNKAHDLLDNKK) show a composition bias toward basic and acidic residues. Positions 93 to 104 (NKNRQRKKIKNK) are enriched in basic residues. Residues 151–168 (KIPQQKKQQVASSIDQSI) are compositionally biased toward polar residues. One can recognise a tr-type G domain in the interval 261-429 (NRPPVVTILG…ILLLAELENL (169 aa)). GTP contacts are provided by residues 270-277 (GHVDHGKT), 316-320 (DTPGH), and 370-373 (SKID).

Belongs to the TRAFAC class translation factor GTPase superfamily. Classic translation factor GTPase family. IF-2 subfamily.

The protein resides in the plastid. It is found in the chloroplast. Its function is as follows. One of the essential components for the initiation of protein synthesis. Protects formylmethionyl-tRNA from spontaneous hydrolysis and promotes its binding to the 30S ribosomal subunits. Also involved in the hydrolysis of GTP during the formation of the 70S ribosomal complex. The polypeptide is Translation initiation factor IF-2, chloroplastic (infB) (Porphyra purpurea (Red seaweed)).